The chain runs to 429 residues: Protein phosphatase 2C homolog 2 (429 aa).

The PPM-type phosphatase domain maps to 16 to 291; that stretch reads LYGLSAMQGW…DNMTMIIIGL (276 aa). Residues Asp-64, Gly-65, Asp-233, and Asp-282 each contribute to the Mn(2+) site. Disordered regions lie at residues 320–348 and 384–429; these read YGKS…NDRS and RDVT…SASS. Over residues 384–397 the composition is skewed to basic and acidic residues; it reads RDVTNHLQHDKAEE. The span at 405–419 shows a compositional bias: low complexity; that stretch reads SESPSSANKNSSGSG.

The protein belongs to the PP2C family. Requires Mg(2+) as cofactor. It depends on Mn(2+) as a cofactor.

Its subcellular location is the cytoplasm. It localises to the nucleus. It carries out the reaction O-phospho-L-seryl-[protein] + H2O = L-seryl-[protein] + phosphate. The catalysed reaction is O-phospho-L-threonyl-[protein] + H2O = L-threonyl-[protein] + phosphate. In terms of biological role, dephosphorylating regulator for many key proteins. Dephosphorylates sakA, to negatively regulate the stress-activated p38MAPK cascade. This chain is Protein phosphatase 2C homolog 2, found in Aspergillus fumigatus (strain ATCC MYA-4609 / CBS 101355 / FGSC A1100 / Af293) (Neosartorya fumigata).